Consider the following 94-residue polypeptide: Large ribosomal subunit protein eL37 (94 aa).

Residues Cys-19, Cys-22, Cys-34, and Cys-37 each coordinate Zn(2+). The segment at 19-37 (CRRCGKATYHKQKLRCAAC) adopts a C4-type zinc-finger fold.

The protein belongs to the eukaryotic ribosomal protein eL37 family. Requires Zn(2+) as cofactor.

The protein resides in the cytoplasm. Its function is as follows. Binds to the 23S rRNA. The chain is Large ribosomal subunit protein eL37 (RPL37) from Tetrahymena thermophila (strain SB210).